Here is a 391-residue protein sequence, read N- to C-terminus: Chorismate synthase (391 aa).

An NADP(+)-binding site is contributed by Arg-48. Residues 126–128, Gly-286, 301–305, and Arg-328 each bind FMN; these read RAS and KPTSS.

This sequence belongs to the chorismate synthase family. FMNH2 is required as a cofactor.

The enzyme catalyses 5-O-(1-carboxyvinyl)-3-phosphoshikimate = chorismate + phosphate. It participates in metabolic intermediate biosynthesis; chorismate biosynthesis; chorismate from D-erythrose 4-phosphate and phosphoenolpyruvate: step 7/7. In terms of biological role, catalyzes the anti-1,4-elimination of the C-3 phosphate and the C-6 proR hydrogen from 5-enolpyruvylshikimate-3-phosphate (EPSP) to yield chorismate, which is the branch point compound that serves as the starting substrate for the three terminal pathways of aromatic amino acid biosynthesis. This reaction introduces a second double bond into the aromatic ring system. The polypeptide is Chorismate synthase (Saccharolobus solfataricus (strain ATCC 35092 / DSM 1617 / JCM 11322 / P2) (Sulfolobus solfataricus)).